Consider the following 84-residue polypeptide: Serine protease inhibitor Kazal-type 2 (84 aa).

An N-terminal signal peptide occupies residues 1-23 (MALSVLRLALLLLAVTFAASLIP). The residue at position 24 (Q24) is a Pyrrolidone carboxylic acid. A Kazal-like domain is found at 30-84 (KYRTPNCSQYRLPGCPRHFNPVCGSDMSTYANECTLCMKIREGGHNIKIIRNGPC). 3 disulfide bridges follow: C36–C66, C44–C63, and C52–C84.

As to expression, expressed in epididymis (at protein level).

The protein resides in the secreted. It is found in the cytoplasmic vesicle. It localises to the secretory vesicle. Its subcellular location is the acrosome. Its function is as follows. As a strong inhibitor of acrosin, it is required for normal spermiogenesis. It probably hinders premature activation of proacrosin and other proteases, thus preventing the cascade of events leading to spermiogenesis defects. May be involved in the regulation of serine protease-dependent germ cell apoptosis. It also inhibits trypsin. This Homo sapiens (Human) protein is Serine protease inhibitor Kazal-type 2 (SPINK2).